The chain runs to 465 residues: Cysteine--tRNA ligase (465 aa).

Cys-27 contributes to the Zn(2+) binding site. The short motif at 29–39 (PTVYNFFHIGN) is the 'HIGH' region element. Positions 207, 232, and 236 each coordinate Zn(2+). The 'KMSKS' region motif lies at 264-268 (KMSKS). Residue Lys-267 participates in ATP binding.

This sequence belongs to the class-I aminoacyl-tRNA synthetase family. Monomer. Zn(2+) is required as a cofactor.

It localises to the cytoplasm. It catalyses the reaction tRNA(Cys) + L-cysteine + ATP = L-cysteinyl-tRNA(Cys) + AMP + diphosphate. The sequence is that of Cysteine--tRNA ligase from Clostridium kluyveri (strain NBRC 12016).